A 278-amino-acid polypeptide reads, in one-letter code: MAIRKYKPTTPGRRASSVSEFEEITRSTPEKSLLRPLSKTGGRNNYGRITTRHIGGGHKRRYRLIDFRRTDKDGIPAKVAHIEYDPNRTANIALLHYADGEKRYIIAPKGLKQGTIVEAGPNADIKVGNNLPLRNIPTGTTIHAVELKPGAGAKLARSAGASIQLLGKEGKYAILRMPSSEIRRVDIRCRATVGEVGNADQMNIRWGKAGRMRWKGVRPTVRGVVMNPVDHPHGGGEGKTSGGRHPVSPWGHKEGRTRNPNRYSNNMIVRRRRPNKKR.

2 disordered regions span residues 1-53 (MAIR…TTRH) and 224-278 (VVMN…NKKR). Basic and acidic residues predominate over residues 23–33 (EITRSTPEKSL). Over residues 258–267 (RNPNRYSNNM) the composition is skewed to polar residues. The segment covering 269–278 (VRRRRPNKKR) has biased composition (basic residues).

This sequence belongs to the universal ribosomal protein uL2 family. In terms of assembly, part of the 50S ribosomal subunit. Forms a bridge to the 30S subunit in the 70S ribosome.

Functionally, one of the primary rRNA binding proteins. Required for association of the 30S and 50S subunits to form the 70S ribosome, for tRNA binding and peptide bond formation. It has been suggested to have peptidyltransferase activity; this is somewhat controversial. Makes several contacts with the 16S rRNA in the 70S ribosome. The protein is Large ribosomal subunit protein uL2 of Corynebacterium aurimucosum (strain ATCC 700975 / DSM 44827 / CIP 107346 / CN-1) (Corynebacterium nigricans).